We begin with the raw amino-acid sequence, 282 residues long: Large ribosomal subunit protein uL2 (282 aa).

Disordered stretches follow at residues 26-55 and 218-266; these read KKSP…RHRG and PHVR…HNKS. Over residues 34-43 the composition is skewed to polar residues; the sequence is LESQSHTAGR. The span at 254–266 shows a compositional bias: basic residues; the sequence is TIGKKTRNKHNKS.

This sequence belongs to the universal ribosomal protein uL2 family. Part of the 50S ribosomal subunit. Forms a bridge to the 30S subunit in the 70S ribosome.

One of the primary rRNA binding proteins. Required for association of the 30S and 50S subunits to form the 70S ribosome, for tRNA binding and peptide bond formation. It has been suggested to have peptidyltransferase activity; this is somewhat controversial. Makes several contacts with the 16S rRNA in the 70S ribosome. This is Large ribosomal subunit protein uL2 from Pediococcus pentosaceus (strain ATCC 25745 / CCUG 21536 / LMG 10740 / 183-1w).